Consider the following 237-residue polypeptide: Ribonuclease 3 (237 aa).

Residues 4 to 130 form the RNase III domain; it reads IQILFQTLNI…LFGAIYLDLG (127 aa). E45 serves as a coordination point for Mg(2+). D49 is an active-site residue. Mg(2+)-binding residues include D116 and E119. Residue E119 is part of the active site. In terms of domain architecture, DRBM spans 154 to 222; sequence DFKTQLQEIV…AQQALSKVAK (69 aa).

This sequence belongs to the ribonuclease III family. Homodimer. It depends on Mg(2+) as a cofactor.

The protein resides in the cytoplasm. The catalysed reaction is Endonucleolytic cleavage to 5'-phosphomonoester.. Functionally, digests double-stranded RNA. Involved in the processing of primary rRNA transcript to yield the immediate precursors to the large and small rRNAs (23S and 16S). Processes some mRNAs, and tRNAs when they are encoded in the rRNA operon. Processes pre-crRNA and tracrRNA of type II CRISPR loci if present in the organism. In Aster yellows witches'-broom phytoplasma (strain AYWB), this protein is Ribonuclease 3.